The chain runs to 595 residues: Inactive metallocarboxypeptidase ecm14 (595 aa).

Positions 1 to 22 are cleaved as a signal peptide; sequence MYRPDHVFVILCAVFFTGQVTA. Positions 23–178 are excised as a propeptide; sequence VPAGTGITHP…MIYESQYPSR (156 aa). Positions 206 to 527 constitute a Peptidase M14 domain; that stretch reads NYQPFPVILQ…NSVLVLGHFL (322 aa). The Zn(2+) site is built by histidine 270 and glutamate 273. Residues 270 to 273, arginine 328, and 345 to 346 contribute to the substrate site; these read HARE and DR. A disulfide bridge connects residues cysteine 339 and cysteine 362. N-linked (GlcNAc...) asparagine glycosylation occurs at asparagine 386. Position 402 (histidine 402) interacts with Zn(2+). Substrate is bound at residue 403–404; sequence SY.

The protein belongs to the peptidase M14 family. Requires Zn(2+) as cofactor.

It is found in the vacuole. Its subcellular location is the secreted. Inactive carboxypeptidase that may play a role in cell wall organization and biogenesis. In Talaromyces marneffei (strain ATCC 18224 / CBS 334.59 / QM 7333) (Penicillium marneffei), this protein is Inactive metallocarboxypeptidase ecm14 (ecm14).